The following is a 243-amino-acid chain: Derlin-1.2 (243 aa).

Over 1–20 (MSSPAEYYKSLPPISKAYGT) the chain is Cytoplasmic. A helical membrane pass occupies residues 21–41 (LCFFTTVLVRLHILNPLFLYL). Over 42–54 (YYPRVFKKFEVWR) the chain is Lumenal. Residues 55–75 (IFTSFFFLGPFSINFGIRLLM) traverse the membrane as a helical segment. At 76–94 (IARYGVMLEKGAFDKRTAD) the chain is on the cytoplasmic side. A helical membrane pass occupies residues 95–115 (FLWMMIFGAISLLVLSVIPQL). Residues 116 to 155 (NTYVLGLPMVSMLVYVWSRENPNAQINIYGILQLKAFYLP) lie on the Lumenal side of the membrane. The helical transmembrane segment at 156–176 (WVMLLLDVIFGSPLMPGLLGI) threads the bilayer. The Cytoplasmic portion of the chain corresponds to 177–243 (MVGHLYYYFA…FRGRSYRLNQ (67 aa)).

It belongs to the derlin family. Expressed in roots and endosperm.

It localises to the endoplasmic reticulum membrane. In terms of biological role, may be involved in the degradation process of specific misfolded endoplasmic reticulum (ER) luminal proteins. The polypeptide is Derlin-1.2 (DER1.2) (Zea mays (Maize)).